A 255-amino-acid chain; its full sequence is Type III pantothenate kinase (255 aa).

An ATP-binding site is contributed by 6–13; the sequence is DVGNTHIV. Residues Tyr-100 and 107–110 each bind substrate; that span reads GADR. Asp-109 (proton acceptor) is an active-site residue. A K(+)-binding site is contributed by Asp-129. Thr-132 lines the ATP pocket. A substrate-binding site is contributed by Thr-184.

This sequence belongs to the type III pantothenate kinase family. Homodimer. It depends on NH4(+) as a cofactor. Requires K(+) as cofactor.

Its subcellular location is the cytoplasm. It carries out the reaction (R)-pantothenate + ATP = (R)-4'-phosphopantothenate + ADP + H(+). It functions in the pathway cofactor biosynthesis; coenzyme A biosynthesis; CoA from (R)-pantothenate: step 1/5. Its function is as follows. Catalyzes the phosphorylation of pantothenate (Pan), the first step in CoA biosynthesis. The protein is Type III pantothenate kinase of Ruminiclostridium cellulolyticum (strain ATCC 35319 / DSM 5812 / JCM 6584 / H10) (Clostridium cellulolyticum).